Consider the following 250-residue polypeptide: Flavin-dependent thymidylate synthase (250 aa).

The 227-residue stretch at 7 to 233 folds into the ThyX domain; it reads LRVQLIAKTD…PAVFADFEIA (227 aa). FAD-binding positions include Ser-71, 95–97, and Gln-103; that span reads RHR. DUMP-binding positions include 92 to 95, 103 to 107, and Arg-172; these read ELIR and QLSQR. The short motif at 95 to 105 is the ThyX motif element; that stretch reads RHRHFSYSQLS. FAD contacts are provided by residues 188–190 and His-194; that span reads NYR. Residue Arg-199 participates in dUMP binding. Arg-199 (involved in ionization of N3 of dUMP, leading to its activation) is an active-site residue.

This sequence belongs to the thymidylate synthase ThyX family. As to quaternary structure, homotetramer. FAD serves as cofactor.

The enzyme catalyses dUMP + (6R)-5,10-methylene-5,6,7,8-tetrahydrofolate + NADPH + H(+) = dTMP + (6S)-5,6,7,8-tetrahydrofolate + NADP(+). It functions in the pathway pyrimidine metabolism; dTTP biosynthesis. Catalyzes the reductive methylation of 2'-deoxyuridine-5'-monophosphate (dUMP) to 2'-deoxythymidine-5'-monophosphate (dTMP) while utilizing 5,10-methylenetetrahydrofolate (mTHF) as the methyl donor, and NADPH and FADH(2) as the reductant. The chain is Flavin-dependent thymidylate synthase from Mycobacterium avium (strain 104).